We begin with the raw amino-acid sequence, 944 residues long: Translation initiation factor IF-2 (944 aa).

Disordered stretches follow at residues 61–157 (IQAN…KAKQ) and 173–281 (TQSN…SHKI). Residues 132 to 150 (TFENQTPPTENTPKVVSHS) show a composition bias toward polar residues. Over residues 175–185 (SNANNASNANN) the composition is skewed to low complexity. The span at 186–203 (AKKEISEVKKQEQEIKRH) shows a compositional bias: basic and acidic residues. A compositionally biased stretch (basic residues) spans 204-215 (ENIKRRTGFRVI). Positions 244–259 (EDIKKEWQEKDKQEAK) are enriched in basic and acidic residues. The region spanning 443-612 (ERPPVVTIMG…LIQAGIMELK (170 aa)) is the tr-type G domain. Residues 452–459 (GHVDHGKT) form a G1 region. Residue 452–459 (GHVDHGKT) participates in GTP binding. Residues 477–481 (GITQH) form a G2 region. A G3 region spans residues 498–501 (DTPG). Residues 498–502 (DTPGH) and 552–555 (NKMD) each bind GTP. The tract at residues 552-555 (NKMD) is G4. The segment at 588–590 (SAK) is G5.

This sequence belongs to the TRAFAC class translation factor GTPase superfamily. Classic translation factor GTPase family. IF-2 subfamily.

It is found in the cytoplasm. Its function is as follows. One of the essential components for the initiation of protein synthesis. Protects formylmethionyl-tRNA from spontaneous hydrolysis and promotes its binding to the 30S ribosomal subunits. Also involved in the hydrolysis of GTP during the formation of the 70S ribosomal complex. The protein is Translation initiation factor IF-2 (infB) of Helicobacter pylori (strain ATCC 700392 / 26695) (Campylobacter pylori).